Here is a 64-residue protein sequence, read N- to C-terminus: MGKAKGIRILITLECTECRSNTNKRSNGVSRYTTQKNRRNNPERIELKKYCPHCNKSTIHKEIK.

This sequence belongs to the bacterial ribosomal protein bL33 family.

It is found in the plastid. It localises to the chloroplast. The sequence is that of Large ribosomal subunit protein bL33c (rpl33) from Trieres chinensis (Marine centric diatom).